Here is a 303-residue protein sequence, read N- to C-terminus: MSFTVAVKEEILGQHHLSWHELSAIIKMSGSIGLSTSGLTLSVVTENAKLARHLYESFLHFYEIKSEIRHHQRSNLRKNRVYTVFTDEKVQDLLSDLHLADSFFGLETGIDEAILSDEEAGRAYLCGAFLANGSIRDPESGKYQLEISSVYLDHAQGIASLLQQFLLDAKVLERKKGAVTYLQRAEDIMDFLIVIGAMQARDDFERVKILRETRNDLNRANNAETANIARTVSASMKTINNISKIKDIMGLENLPVDLQEVAQLRIQHPDYSIQQLADSLSTPLTKSGVNHRLRKINKIADEL.

A DNA-binding region (H-T-H motif) is located at residues 272-303 (SIQQLADSLSTPLTKSGVNHRLRKINKIADEL).

The protein belongs to the WhiA family.

Its function is as follows. Involved in cell division and chromosome segregation. The polypeptide is Probable cell division protein WhiA (Streptococcus pneumoniae serotype 2 (strain D39 / NCTC 7466)).